The following is a 244-amino-acid chain: Phosphonates import ATP-binding protein PhnC 2 (244 aa).

The ABC transporter domain occupies 6–244; sequence IECHNLETAY…LQAQFVVNNQ (239 aa). 41–48 is an ATP binding site; sequence GLNGAGKS.

Belongs to the ABC transporter superfamily. Phosphonates importer (TC 3.A.1.9.1) family. The complex is composed of two ATP-binding proteins (PhnC), two transmembrane proteins (PhnE) and a solute-binding protein (PhnD).

It localises to the cell inner membrane. The enzyme catalyses phosphonate(out) + ATP + H2O = phosphonate(in) + ADP + phosphate + H(+). Its function is as follows. Part of the ABC transporter complex PhnCDE involved in phosphonates import. Responsible for energy coupling to the transport system. The protein is Phosphonates import ATP-binding protein PhnC 2 of Nostoc sp. (strain PCC 7120 / SAG 25.82 / UTEX 2576).